The primary structure comprises 3799 residues: Polyketide synthase GfsE (3799 aa).

The Ketosynthase family 3 (KS3) 1 domain occupies 33–459 (HEPIAIIGMS…GTNAHAILEE (427 aa)). Module regions lie at residues 33-1730 (HEPI…RSSA) and 1749-3494 (DEAI…RTDL). Catalysis depends on for beta-ketoacyl synthase 1 activity residues C206, H341, and H381. The disordered stretch occupies residues 462 to 496 (AATGNPTEADTDQEPAASASPDRTTTLPAVPWPLS). The Malonyl-CoA:ACP transacylase (MAT) 1 domain maps to 582–895 (FVFPGQGSQW…LGEAHAHGAD (314 aa)). The N-terminal hotdog fold 1 stretch occupies residues 944-1069 (HPLFGAVVEV…GVLELEARPE (126 aa)). The region spanning 944–1222 (HPLFGAVVEV…SRPVAEEQLG (279 aa)) is the PKS/mFAS DH 1 domain. H976 acts as the Proton acceptor; for dehydratase activity 1 in catalysis. The C-terminal hotdog fold 1 stretch occupies residues 1081–1222 (AEVVPVEGLY…SRPVAEEQLG (142 aa)). The active-site Proton donor; for dehydratase activity 1 is D1142. The Ketoreductase (KR) 1 domain occupies 1382 to 1554 (LLVTGASGVL…TSLSWGLWAE (173 aa)). The 79-residue stretch at 1652 to 1730 (EAERAVLELV…ALATHIRSSA (79 aa)) folds into the Carrier 1 domain. S1690 carries the post-translational modification O-(pantetheine 4'-phosphoryl)serine. The Ketosynthase family 3 (KS3) 2 domain maps to 1749-2174 (DEAIAIVGMA…GTNAHVILEQ (426 aa)). Catalysis depends on for beta-ketoacyl synthase 2 activity residues C1921, H2056, and H2096. One can recognise a Malonyl-CoA:ACP transacylase (MAT) 2 domain in the interval 2284–2604 (FVFPGQGSQW…VSLAKVHTHG (321 aa)). Residues 2656–2781 (HPLLTGVVDL…GTLAVDADHD (126 aa)) are N-terminal hotdog fold 2. Residues 2656-2936 (HPLLTGVVDL…TRPVTAAQFA (281 aa)) form the PKS/mFAS DH 2 domain. The active-site Proton acceptor; for dehydratase activity 2 is H2688. The tract at residues 2794-2936 (ADPVDLTEVY…TRPVTAAQFA (143 aa)) is C-terminal hotdog fold 2. Catalysis depends on D2855, which acts as the Proton donor; for dehydratase activity 2. The Ketoreductase (KR) 2 domain maps to 3142-3314 (LLVTGASGVL…TALSWGLWAE (173 aa)). The 76-residue stretch at 3419–3494 (AALLDLVGAQ…ALAAQLRTDL (76 aa)) folds into the Carrier 2 domain. Residue S3454 is modified to O-(pantetheine 4'-phosphoryl)serine.

Pantetheine 4'-phosphate serves as cofactor.

Its pathway is antibiotic biosynthesis. Fifth protein in the synthesis of the 16-membered macrolide antibiotics FD-891 and FD-892. Composed of 2 modules. Modifies the product of GfsD by multiple rounds of addition of methylmalonyl-CoA and other modifications to help generate the final products. This is Polyketide synthase GfsE from Streptomyces halstedii.